Consider the following 1026-residue polypeptide: Glutactin (1026 aa).

Positions 1-17 are cleaved as a signal peptide; sequence MKPLLLVLALCGAQVHA. Tyr-26 and Tyr-29 each carry sulfotyrosine. N-linked (GlcNAc...) asparagine glycosylation occurs at Asn-115. Cys-123 and Cys-145 are oxidised to a cystine. Tyr-182 is modified (sulfotyrosine). Cys-298 and Cys-316 are oxidised to a cystine. N-linked (GlcNAc...) asparagine glycans are attached at residues Asn-368 and Asn-402. Residue Tyr-559 is modified to Sulfotyrosine. The interval 601–641 is disordered; it reads PITTTTTTTTTTTTTSRPYAYNPYANWQNRPSQQHPNWHPA. Over residues 603–615 the composition is skewed to low complexity; sequence TTTTTTTTTTTTT. The span at 625–636 shows a compositional bias: polar residues; that stretch reads ANWQNRPSQQHP. Residue Tyr-645 is modified to Sulfotyrosine. Disordered regions lie at residues 659 to 695 and 723 to 1026; these read EREQ…REQE and EREQ…NSRN. The span at 723 to 752 shows a compositional bias: basic and acidic residues; it reads EREQYEREQQEREQREREELERQQREREQQ. Tyr-727 is modified (sulfotyrosine). The N-linked (GlcNAc...) asparagine glycan is linked to Asn-810. Over residues 811-854 the composition is skewed to basic and acidic residues; sequence FSEEDREQQQQEQLRREQQEQQEREYQLQLEREQQEREQQERGQ. A sulfotyrosine mark is found at Tyr-836, Tyr-862, Tyr-865, Tyr-868, Tyr-922, and Tyr-928. Residues 855–866 show a composition bias toward low complexity; that stretch reads QEPGPEEYPSYE. Residues 867–893 show a composition bias toward basic and acidic residues; it reads EYSRALQEKNAERDRIYAEEQERERQQ. Basic and acidic residues predominate over residues 923 to 944; that stretch reads DGDRSYAEEQEREQQRRDQVEQ. The segment covering 945–969 has biased composition (acidic residues); the sequence is EREEQPDEDQGEEYERSPDEEEAAE. Residues Tyr-981, Tyr-984, and Tyr-1006 each carry the sulfotyrosine modification. Residues 1002–1026 show a composition bias toward basic and acidic residues; the sequence is EEERYRAQQEEEDRIQAERERNSRN.

This sequence in the N-terminal section; belongs to the type-B carboxylesterase/lipase family. Extensively O-glycosylated and also N-glycosylated. In terms of processing, about four tyrosines are sulfated.

It localises to the secreted. The protein resides in the extracellular space. It is found in the extracellular matrix. The protein localises to the basement membrane. In terms of biological role, not known. Binds calcium ions. The chain is Glutactin (Glt) from Drosophila melanogaster (Fruit fly).